Here is a 218-residue protein sequence, read N- to C-terminus: Adenylate kinase (218 aa).

ATP is bound at residue 10–15 (GAGKGT). The segment at 30-59 (STGNMLRAAVKAGTPLGLEAKKVMDAGGLV) is NMP. AMP-binding positions include T31, R36, 57–59 (GLV), 85–88 (GFPR), and Q92. Residues 122–159 (GRRVHPASGRSYHVRFNPPKAEGVDDVTGEPLVQRDDD) are LID. ATP is bound by residues R123 and 132-133 (SY). Positions 156 and 167 each coordinate AMP. G203 contributes to the ATP binding site.

This sequence belongs to the adenylate kinase family. In terms of assembly, monomer.

It localises to the cytoplasm. The catalysed reaction is AMP + ATP = 2 ADP. Its pathway is purine metabolism; AMP biosynthesis via salvage pathway; AMP from ADP: step 1/1. Its function is as follows. Catalyzes the reversible transfer of the terminal phosphate group between ATP and AMP. Plays an important role in cellular energy homeostasis and in adenine nucleotide metabolism. The polypeptide is Adenylate kinase (Bordetella parapertussis (strain 12822 / ATCC BAA-587 / NCTC 13253)).